The chain runs to 2036 residues: Ral GTPase-activating protein subunit alpha-1 (2036 aa).

Disordered stretches follow at residues 343-384 (LVSR…SSLC) and 476-497 (EEGE…RNSS). Basic and acidic residues predominate over residues 345 to 365 (SREESKNDNADKTDRTTEPEQ). Polar residues-rich tracts occupy residues 366–384 (SHSN…SSLC) and 486–497 (GTNTADHVRNSS). Ser-711 and Ser-721 each carry phosphoserine. Positions 715-753 (SFSRGWSRDQPGQAPMRQRSATTTGSPGTEKARSIVRQK) are disordered. Thr-754 bears the Phosphothreonine mark. Ser-773 carries the post-translational modification Phosphoserine. Thr-778 carries the post-translational modification Phosphothreonine. Phosphoserine occurs at positions 797, 860, 861, and 864. Disordered regions lie at residues 849 to 910 (SGNA…SDSH) and 982 to 1009 (TITG…STLN). Residues 850–863 (GNASTMTRRGSSPG) show a composition bias toward polar residues. Over residues 895–910 (SPASAGSSDLISSDSH) the composition is skewed to low complexity. Residues 983 to 1009 (ITGSESASPVHSPLGSRSQTPSPSTLN) are compositionally biased toward polar residues. Residues Ser-986, Ser-990, Ser-994, and Ser-1000 each carry the phosphoserine modification. Residue Thr-1002 is modified to Phosphothreonine. Phosphoserine occurs at positions 1004 and 1478. Residues 1327–2035 (FTNKTVAHVA…PYHHLPSDAD (709 aa)) are minimal domain that binds to TCF3/E12. Positions 1716–1744 (KQENDVINAILKQHTEEKEFVEKHFNDLN) form a coiled coil. The Rap-GAP domain maps to 1796–2004 (LRNLDSRQCR…EERARYLQTI (209 aa)).

In terms of assembly, component of the heterodimeric RalGAP1 complex with RALGAPB. Heterodimerization is required for activity. Interacts with the HLH region of TCF3/isoform E12. In terms of tissue distribution, widely expressed.

The protein resides in the cytoplasm. Its subcellular location is the nucleus. Catalytic subunit of the heterodimeric RalGAP1 complex which acts as a GTPase activator for the Ras-like small GTPases RALA and RALB. In Homo sapiens (Human), this protein is Ral GTPase-activating protein subunit alpha-1 (RALGAPA1).